A 1705-amino-acid chain; its full sequence is Homeobox-DDT domain protein RLT1 (1705 aa).

Disordered stretches follow at residues 1-53, 118-167, 237-267, 296-322, and 352-414; these read MEMG…QLET, ELPA…EYET, HDPR…TPNM, GPVP…MPSP, and GVRK…RKEE. A DNA-binding region (homeobox) is located at residues 39-98; that stretch reads VKPKRQMKTPFQLETLEKVYSEEKYPSEATRAELSEKLDLSDRQLQMWFCHRRLKDKKDG. The span at 136 to 159 shows a compositional bias: low complexity; that stretch reads GSESGCSPYSNSRRNFASGSSSSR. 2 stretches are compositionally biased toward polar residues: residues 253–265 and 310–319; these read EQQS…SFTP and RNCSTSQQDM. The 60-residue stretch at 549 to 608 folds into the DDT domain; it reads DETVGNLLMVWRFLISFSDVLDLWPFTLDEFIQAFHDYDSRLLGEIHVTLLRSIIRDVED. One can recognise an HTH HARE-type domain in the interval 731–800; it reads GTVKFAAFHV…APSTYCVRAP (70 aa). Disordered stretches follow at residues 1028-1053, 1198-1229, 1441-1502, 1561-1635, and 1652-1705; these read TRER…DLSN, VNHS…SIRV, PEDE…KAQS, PKSE…FVDY, and AIEE…SSDS. The span at 1201-1220 shows a compositional bias: low complexity; that stretch reads SPTDSVSPSSSAISGSNSDS. The segment covering 1455–1465 has biased composition (basic and acidic residues); the sequence is SPFKGKGPREQ. Composition is skewed to acidic residues over residues 1565-1574, 1611-1628, and 1669-1684; these read EVEEDEEEEE, VDDE…DEDG, and GEDD…DDDV.

As to quaternary structure, interacts with CHR11 and CHR17. Interacts (via the DDT domain) with CHR11 (via C-terminus). In terms of tissue distribution, highly expressed in growing tissues such as inflorescence and flower meristems, young leaves and floral organs. Expressed in roots, rosette and cauline leaves, stems, flowers, inflorescences and siliques.

The protein localises to the nucleus. Functionally, transcriptional regulator required for the maintenance of the plant vegetative phase. In association with CHR11 or CHR17 may prevent the early activation of the vegetative-to-reproductive transition by regulating key genes that contribute to flower timing, such as FT, SEP1, SEP3, AGL8/FUL, SOC1 and FLC. The protein is Homeobox-DDT domain protein RLT1 of Arabidopsis thaliana (Mouse-ear cress).